The chain runs to 204 residues: Crossover junction endodeoxyribonuclease RuvC (204 aa).

Residues Asp-7, Glu-68, and Asp-141 contribute to the active site. Positions 7, 68, and 141 each coordinate Mg(2+).

It belongs to the RuvC family. Homodimer which binds Holliday junction (HJ) DNA. The HJ becomes 2-fold symmetrical on binding to RuvC with unstacked arms; it has a different conformation from HJ DNA in complex with RuvA. In the full resolvosome a probable DNA-RuvA(4)-RuvB(12)-RuvC(2) complex forms which resolves the HJ. Mg(2+) serves as cofactor.

Its subcellular location is the cytoplasm. The catalysed reaction is Endonucleolytic cleavage at a junction such as a reciprocal single-stranded crossover between two homologous DNA duplexes (Holliday junction).. In terms of biological role, the RuvA-RuvB-RuvC complex processes Holliday junction (HJ) DNA during genetic recombination and DNA repair. Endonuclease that resolves HJ intermediates. Cleaves cruciform DNA by making single-stranded nicks across the HJ at symmetrical positions within the homologous arms, yielding a 5'-phosphate and a 3'-hydroxyl group; requires a central core of homology in the junction. The consensus cleavage sequence is 5'-(A/T)TT(C/G)-3'. Cleavage occurs on the 3'-side of the TT dinucleotide at the point of strand exchange. HJ branch migration catalyzed by RuvA-RuvB allows RuvC to scan DNA until it finds its consensus sequence, where it cleaves and resolves the cruciform DNA. This chain is Crossover junction endodeoxyribonuclease RuvC, found in Clavibacter sepedonicus (Clavibacter michiganensis subsp. sepedonicus).